Consider the following 341-residue polypeptide: GTPase Obg (341 aa).

The 159-residue stretch at 1-159 (MKFVDEALIK…RNLRLELRVL (159 aa)) folds into the Obg domain. The tract at residues 128–150 (TRYKSSVNRSPRQTTPGSPGESR) is disordered. Polar residues predominate over residues 129 to 144 (RYKSSVNRSPRQTTPG). Positions 160 to 334 (ADVGLLGLPN…LCYALMQLID (175 aa)) constitute an OBG-type G domain. Residues 166 to 173 (GLPNAGKS), 191 to 195 (FTTLH), 213 to 216 (DIPG), 283 to 286 (NKID), and 315 to 317 (SAI) each bind GTP. S173 and T193 together coordinate Mg(2+).

Belongs to the TRAFAC class OBG-HflX-like GTPase superfamily. OBG GTPase family. As to quaternary structure, monomer. The cofactor is Mg(2+).

Its subcellular location is the cytoplasm. In terms of biological role, an essential GTPase which binds GTP, GDP and possibly (p)ppGpp with moderate affinity, with high nucleotide exchange rates and a fairly low GTP hydrolysis rate. Plays a role in control of the cell cycle, stress response, ribosome biogenesis and in those bacteria that undergo differentiation, in morphogenesis control. The polypeptide is GTPase Obg (Legionella pneumophila (strain Lens)).